The sequence spans 577 residues: Putative pseudouridine synthase B0024.11 (577 aa).

Aspartate 188 acts as the Nucleophile in catalysis. The region spanning 265–472 (GFINYFGTQR…GESSRCLFVE (208 aa)) is the TRUD domain. Residues 538-565 (KAMRDASFKTRGDDEKTEENVLEEKGSD) show a composition bias toward basic and acidic residues. A disordered region spans residues 538 to 577 (KAMRDASFKTRGDDEKTEENVLEEKGSDDANELNLVSEDQ).

It belongs to the pseudouridine synthase TruD family.

It carries out the reaction a uridine in tRNA = a pseudouridine in tRNA. This Caenorhabditis elegans protein is Putative pseudouridine synthase B0024.11.